The following is a 602-amino-acid chain: Elongation factor 4 (602 aa).

The 182-residue stretch at 7 to 188 folds into the tr-type G domain; it reads ENIRNFSIIA…SIIRLVPPPK (182 aa). Residues 19–24 and 135–138 contribute to the GTP site; these read DHGKST and NKID.

Belongs to the TRAFAC class translation factor GTPase superfamily. Classic translation factor GTPase family. LepA subfamily.

It is found in the cell inner membrane. It catalyses the reaction GTP + H2O = GDP + phosphate + H(+). Its function is as follows. Required for accurate and efficient protein synthesis under certain stress conditions. May act as a fidelity factor of the translation reaction, by catalyzing a one-codon backward translocation of tRNAs on improperly translocated ribosomes. Back-translocation proceeds from a post-translocation (POST) complex to a pre-translocation (PRE) complex, thus giving elongation factor G a second chance to translocate the tRNAs correctly. Binds to ribosomes in a GTP-dependent manner. This chain is Elongation factor 4, found in Chlamydia trachomatis serovar L2 (strain ATCC VR-902B / DSM 19102 / 434/Bu).